Reading from the N-terminus, the 631-residue chain is MSAQKETLGFQTEVKQLLKLMIHSLYSNKEIFLRELISNASDAADKLRFEGLAKPELFENDPELKIRIAFDKDARTITIADNGIGMSRDEVVSHIGTIAKSGTKSFFEQLSGDEKKDAHLIGQFGVGFYSAFIVADKVTLTTRRAGEAEAVRWESHGEGEYTLESVEKAERGTEIVLHLKEGEDELLNDWKLKGIIRKYSDHISIPIEMKKGNSYGENGEVIVSDEMEAVNSASALWTRSKNDISEEQYQEFYKHVAHDFTAPLAWSHARVEGRQEYTELLYIPSRAPFDLYDRERKQGVKLYVRRVFIMEDTEKLMPHYLRFVRGVIDSNDLPLNVSREILQESKDIDAIRAGCVKKVLGLLEDLSANQPEKYAEFWKEFGQVLKEGVGEDFANKERIAKLLRFVSTASEDAEPTVSLADYIGRMKEGQDKIYYITADTLAAAKNSPHLEVFKKKGVEVLLLTDRVDEWVTGSLFEFDGKALQSVAKGALDLGALEDEADKEAQKQVEEASKPVVEKVQKALGDKVKEVRATARLVESPACLVAGEHDMSAHLERMLKAAGQKIEGSKPTLEINPEHVLVKRLAEESDEARAGDLAAVLYDQALLAEGGKLEDPASFVKRINKLMLELSV.

The segment at Met-1 to Arg-339 is a; substrate-binding. Residues Glu-340 to Arg-556 are b. The segment at Met-557–Val-631 is c.

It belongs to the heat shock protein 90 family. As to quaternary structure, homodimer.

The protein localises to the cytoplasm. Functionally, molecular chaperone. Has ATPase activity. The polypeptide is Chaperone protein HtpG (Chromobacterium violaceum (strain ATCC 12472 / DSM 30191 / JCM 1249 / CCUG 213 / NBRC 12614 / NCIMB 9131 / NCTC 9757 / MK)).